We begin with the raw amino-acid sequence, 1693 residues long: Serine protease filzig (1693 aa).

Over Met1 to Gln47 the chain is Cytoplasmic. A helical; Signal-anchor for type II membrane protein membrane pass occupies residues Leu48–Ser68. At Gly69–Lys1693 the chain is on the extracellular side. 4 disordered regions span residues Gln170–Ser198, Gln212–Phe321, Gly352–Gly465, and Ser477–Ser524. 2 stretches are compositionally biased toward polar residues: residues Phe178–Ser198 and Gln212–Pro222. 2 stretches are compositionally biased toward low complexity: residues Glu230 to Glu241 and Thr252 to Ser268. A compositionally biased stretch (polar residues) spans Glu274–Pro294. Low complexity-rich tracts occupy residues Ser358–Lys404, Gln422–Pro431, and Glu488–Gln501. Polar residues predominate over residues Ser502 to Ser524. N-linked (GlcNAc...) asparagine glycans are attached at residues Asn541 and Asn582. Disordered stretches follow at residues Gln615–Gly635, His752–Thr1007, and Tyr1057–Ile1090. Residues Ser771–Tyr799 show a composition bias toward polar residues. Over residues Pro836–Val847 the composition is skewed to basic residues. Composition is skewed to polar residues over residues Gln951–Tyr962 and Lys989–Ser1000. N-linked (GlcNAc...) asparagine glycosylation is found at Asn1215 and Asn1272. Low complexity-rich tracts occupy residues Pro1297 to Lys1307, Thr1331 to Arg1353, and Arg1362 to Arg1376. The segment at Pro1297–Ser1435 is disordered. Over residues Asp1380–Val1391 the composition is skewed to acidic residues. Positions Ile1449 to Gly1691 constitute a Peptidase S1 domain. A disulfide bond links Cys1480 and Cys1496. Catalysis depends on charge relay system residues His1495 and Asp1544. 2 disulfide bridges follow: Cys1608–Cys1627 and Cys1638–Cys1667. The Charge relay system role is filled by Ser1642.

It belongs to the peptidase S1 family.

It localises to the cell membrane. In terms of biological role, probable endopeptidase. In tracheal terminal cells, acts downstream of ich to regulate seamless tube growth and/or maintenance probably by processing lumenal matrix proteins. The polypeptide is Serine protease filzig (Drosophila melanogaster (Fruit fly)).